The sequence spans 572 residues: Proline--tRNA ligase (572 aa).

This sequence belongs to the class-II aminoacyl-tRNA synthetase family. ProS type 1 subfamily. Homodimer.

The protein localises to the cytoplasm. The enzyme catalyses tRNA(Pro) + L-proline + ATP = L-prolyl-tRNA(Pro) + AMP + diphosphate. In terms of biological role, catalyzes the attachment of proline to tRNA(Pro) in a two-step reaction: proline is first activated by ATP to form Pro-AMP and then transferred to the acceptor end of tRNA(Pro). As ProRS can inadvertently accommodate and process non-cognate amino acids such as alanine and cysteine, to avoid such errors it has two additional distinct editing activities against alanine. One activity is designated as 'pretransfer' editing and involves the tRNA(Pro)-independent hydrolysis of activated Ala-AMP. The other activity is designated 'posttransfer' editing and involves deacylation of mischarged Ala-tRNA(Pro). The misacylated Cys-tRNA(Pro) is not edited by ProRS. The polypeptide is Proline--tRNA ligase (Psychrobacter arcticus (strain DSM 17307 / VKM B-2377 / 273-4)).